Reading from the N-terminus, the 591-residue chain is Nuclear receptor subfamily 4 group A member 2 (591 aa).

Disordered stretches follow at residues 1-22 and 110-133; these read MPCV…SQSY and SEEM…SSTP. Residues 8–22 show a composition bias toward low complexity; it reads YGSSPQGASPASQSY. Residues 253–328 constitute a DNA-binding region (nuclear receptor); it reads EGLCAVCGDN…VGMVKEVVRT (76 aa). 2 consecutive NR C4-type zinc fingers follow at residues 256–276 and 292–311; these read CAVC…CEGC and CLAN…CQYC. The short motif at 280–307 is the Bipartite nuclear localization signal (NLS1) element; it reads FKRTVQKNAKYVCLANKNCPVDKRRRNR. A disordered region spans residues 330 to 354; the sequence is SLKGRRGRLPSKPKSPQEPSPPSPP. A Nuclear localization signal (NLS1) motif is present at residues 331-343; the sequence is LKGRRGRLPSKPK. Over residues 345 to 354 the composition is skewed to pro residues; the sequence is PQEPSPPSPP. The 236-residue stretch at 353–588 folds into the NR LBD domain; the sequence is PPVSLISALV…AIIDKLFLDT (236 aa). The short motif at 436-445 is the nuclear export sequence (NES1) element; sequence FLELFVLRLA. Residues 561–570 carry the nuclear export sequence (NES2) motif; that stretch reads QGLQRIFYLK.

Belongs to the nuclear hormone receptor family.

It localises to the cytoplasm. It is found in the nucleus. Its function is as follows. Transcriptional regulator which may play a role in the differentiation and maintenance of meso-diencephalic dopaminergic (mdDA) neurons. This Xenopus tropicalis (Western clawed frog) protein is Nuclear receptor subfamily 4 group A member 2 (nr4a2).